Here is a 441-residue protein sequence, read N- to C-terminus: Dolichyl-diphosphooligosaccharide--protein glycosyltransferase 48 kDa subunit (441 aa).

Positions 1-28 (MKMVPRLAVRAWPLCGLLLAALGCVCAS) are cleaved as a signal peptide. The Lumenal segment spans residues 29 to 412 (GPRTLVLLDN…YERFIPSAYP (384 aa)). A helical membrane pass occupies residues 413-432 (YYASAFSMMAGLFLFSVVFL). The Cytoplasmic portion of the chain corresponds to 433–441 (HMKEKEKSD).

Belongs to the DDOST 48 kDa subunit family. Component of the oligosaccharyltransferase (OST) complex. OST exists in two different complex forms which contain common core subunits RPN1, RPN2, OST48, OST4, DAD1 and TMEM258, either STT3A or STT3B as catalytic subunits, and form-specific accessory subunits. STT3A complex assembly occurs through the formation of 3 subcomplexes. Subcomplex 1 contains RPN1 and TMEM258, subcomplex 2 contains the STT3A-specific subunits STT3A, DC2/OSTC, and KCP2 as well as the core subunit OST4, and subcomplex 3 contains RPN2, DAD1, and OST48. The STT3A complex can form stable complexes with the Sec61 complex or with both the Sec61 and TRAP complexes. Interacts with SMIM22.

The protein localises to the endoplasmic reticulum membrane. It functions in the pathway protein modification; protein glycosylation. Functionally, subunit of the oligosaccharyl transferase (OST) complex that catalyzes the initial transfer of a defined glycan (Glc(3)Man(9)GlcNAc(2) in eukaryotes) from the lipid carrier dolichol-pyrophosphate to an asparagine residue within an Asn-X-Ser/Thr consensus motif in nascent polypeptide chains, the first step in protein N-glycosylation. N-glycosylation occurs cotranslationally and the complex associates with the Sec61 complex at the channel-forming translocon complex that mediates protein translocation across the endoplasmic reticulum (ER). All subunits are required for a maximal enzyme activity. Required for the assembly of both SST3A- and SS3B-containing OST complexes. The sequence is that of Dolichyl-diphosphooligosaccharide--protein glycosyltransferase 48 kDa subunit from Rattus norvegicus (Rat).